A 328-amino-acid polypeptide reads, in one-letter code: DNA-directed RNA polymerase subunit alpha (328 aa).

Positions 1 to 234 are alpha N-terminal domain (alpha-NTD); it reads MQGSVTEFLK…EQLDAFVDLR (234 aa). The alpha C-terminal domain (alpha-CTD) stretch occupies residues 248–328; that stretch reads FDPILLRPVD…NWPPASIAED (81 aa).

It belongs to the RNA polymerase alpha chain family. In terms of assembly, homodimer. The RNAP catalytic core consists of 2 alpha, 1 beta, 1 beta' and 1 omega subunit. When a sigma factor is associated with the core the holoenzyme is formed, which can initiate transcription.

It carries out the reaction RNA(n) + a ribonucleoside 5'-triphosphate = RNA(n+1) + diphosphate. In terms of biological role, DNA-dependent RNA polymerase catalyzes the transcription of DNA into RNA using the four ribonucleoside triphosphates as substrates. The protein is DNA-directed RNA polymerase subunit alpha of Haemophilus influenzae (strain PittEE).